A 178-amino-acid polypeptide reads, in one-letter code: Caveolin-1 (178 aa).

Serine 2 carries the post-translational modification N-acetylserine. Serine 2 is subject to Phosphoserine. Residues 2–94 form a required for homooligomerization region; it reads SGGKYVDSEG…WKASFTTFTV (93 aa). Residues 2-104 lie on the Cytoplasmic side of the membrane; that stretch reads SGGKYVDSEG…TKYWFYRLLS (103 aa). Lysine 5 bears the N6-acetyllysine; alternate mark. Residue lysine 5 forms a Glycyl lysine isopeptide (Lys-Gly) (interchain with G-Cter in ubiquitin); alternate linkage. Tyrosine 6 is subject to Phosphotyrosine. Serine 9 is subject to Phosphoserine. Tyrosine 14 is modified (phosphotyrosine; by ABL1). Tyrosine 25 carries the post-translational modification Phosphotyrosine. Residues lysine 26, lysine 39, lysine 47, and lysine 57 each participate in a glycyl lysine isopeptide (Lys-Gly) (interchain with G-Cter in ubiquitin) cross-link. An interaction with CAVIN3 region spans residues 82–94; the sequence is DGIWKASFTTFTV. An intramembrane region (helical) is located at residues 105 to 125; sequence ALFGIPMALIWGIYFAILSFL. Topologically, residues 126 to 178 are cytoplasmic; the sequence is HIWAVVPCIKSFLIEIQCISRVYSIYVHTFCDPLFEAIGKIFSSIRINMQKEI. The interval 131-142 is interacts with SPRY1, SPRY2, SPRY3 and SPRY4; the sequence is VPCIKSFLIEIQ. S-palmitoyl cysteine attachment occurs at residues cysteine 133, cysteine 143, and cysteine 156. Residues 149 to 160 form an interacts with SPRY1, SPRY2, and SPRY4 region; it reads SIYVHTFCDPLF. Residues 167 to 178 form an interacts with SPRY1, SPRY2, SPRY3 and SPRY4 region; sequence FSSIRINMQKEI.

This sequence belongs to the caveolin family. In terms of assembly, homooligomer. Interacts with GLIPR2. Interacts with NOSTRIN. Interacts with SNAP25 and STX1A. Interacts (via the N-terminus) with DPP4; the interaction is direct. Interacts with CTNNB1, CDH1 and JUP. Interacts with PACSIN2; this interaction induces membrane tubulation. Interacts with SLC7A9. Interacts with BMX and BTK. Interacts with TGFBR1. Interacts with CAVIN3 (via leucine-zipper domain) in a cholesterol-sensitive manner. Interacts with CAVIN1. Interacts with EHD2 in a cholesterol-dependent manner. Forms a ternary complex with UBXN6 and VCP; mediates CAV1 targeting to lysosomes for degradation. Interacts with ABCG1; this interaction regulates ABCG1-mediated cholesterol efflux. Interacts with NEU3; this interaction enhances NEU3 sialidase activity within caveola. Interacts (via C-terminus) with SPRY1, SPRY2 (via C-terminus), SPRY3, and SPRY4. Interacts with IGFBP5; this interaction allows trafficking of IGFBP5 from the plasma membrane to the nucleus. Phosphorylated at Tyr-14 by ABL1 in response to oxidative stress. Post-translationally, ubiquitinated. Undergo monoubiquitination and multi- and/or polyubiquitination. Monoubiquitination of N-terminal lysines promotes integration in a ternary complex with UBXN6 and VCP which promotes oligomeric CAV1 targeting to lysosomes for degradation. Ubiquitinated by ZNRF1; leading to degradation and modulation of the TLR4-mediated immune response.

Its subcellular location is the golgi apparatus membrane. The protein resides in the cell membrane. The protein localises to the membrane. It localises to the caveola. It is found in the membrane raft. Its function is as follows. May act as a scaffolding protein within caveolar membranes. Forms a stable heterooligomeric complex with CAV2 that targets to lipid rafts and drives caveolae formation. Mediates the recruitment of CAVIN proteins (CAVIN1/2/3/4) to the caveolae. Interacts directly with G-protein alpha subunits and can functionally regulate their activity. Involved in the costimulatory signal essential for T-cell receptor (TCR)-mediated T-cell activation. Its binding to DPP4 induces T-cell proliferation and NF-kappa-B activation in a T-cell receptor/CD3-dependent manner. Recruits CTNNB1 to caveolar membranes and may regulate CTNNB1-mediated signaling through the Wnt pathway. Negatively regulates TGFB1-mediated activation of SMAD2/3 by mediating the internalization of TGFBR1 from membrane rafts leading to its subsequent degradation. Binds 20(S)-hydroxycholesterol (20(S)-OHC). The polypeptide is Caveolin-1 (CAV1) (Loxodonta africana (African elephant)).